The sequence spans 990 residues: Serine/threonine-protein phosphatase 6 regulatory ankyrin repeat subunit B (990 aa).

28 ANK repeats span residues alanine 7–alanine 36, glutamate 40–alanine 69, methionine 73–alanine 102, asparagine 106–valine 135, glycine 139–alanine 168, lysine 172–cysteine 201, lysine 205–glutamate 234, tyrosine 238–glutamine 267, asparagine 271–isoleucine 301, aspartate 305–cysteine 334, aspartate 338–lysine 367, histidine 371–threonine 400, phenylalanine 404–lysine 433, arginine 437–glutamate 466, tryptophan 470–glutamate 499, glutamate 531–glutamate 560, alanine 566–isoleucine 595, lysine 599–valine 628, threonine 633–valine 662, lysine 666–alanine 695, leucine 699–cysteine 728, arginine 732–aspartate 761, glutamine 768–phenylalanine 797, asparagine 800–valine 829, lysine 835–alanine 864, alanine 868–leucine 898, aspartate 902–leucine 931, and serine 938–alanine 967.

Protein phosphatase 6 (PP6) holoenzyme is proposed to be a heterotrimeric complex formed by the catalytic subunit, a SAPS domain-containing subunit (PP6R) and an ankyrin repeat-domain containing regulatory subunit (ARS).

Its function is as follows. Putative regulatory subunit of protein phosphatase 6 (PP6) that may be involved in the recognition of phosphoprotein substrates. The protein is Serine/threonine-protein phosphatase 6 regulatory ankyrin repeat subunit B (ANKRD44) of Gallus gallus (Chicken).